A 231-amino-acid polypeptide reads, in one-letter code: Endonuclease NucS (231 aa).

It belongs to the NucS endonuclease family.

Its subcellular location is the cytoplasm. Cleaves both 3' and 5' ssDNA extremities of branched DNA structures. The polypeptide is Endonuclease NucS (Beutenbergia cavernae (strain ATCC BAA-8 / DSM 12333 / CCUG 43141 / JCM 11478 / NBRC 16432 / NCIMB 13614 / HKI 0122)).